The following is a 219-amino-acid chain: Glucagon-2 (219 aa).

An N-terminal signal peptide occupies residues 1–20; that stretch reads MKSTCYMIGILLLILQNTYQ. 5 consecutive propeptides follow at residues 21–50, 84–95, 136–140, 175–178, and 213–219; these read SPVP…LKEV, SGGLSRRNADYE, NAEIE, IRYS, and KDLLEEH. A disordered region spans residues 23–43; it reads VPEADGSSRSVKAARNEAVDD.

It belongs to the glucagon family.

The protein localises to the secreted. Functionally, promotes hydrolysis of glycogen and lipids, and raises the blood sugar level. The sequence is that of Glucagon-2 (gcg2) from Xenopus laevis (African clawed frog).